Reading from the N-terminus, the 244-residue chain is Homeobox-leucine zipper protein HOX14 (244 aa).

The tract at residues 25-64 (ASGEVQGERPRARRRRRRGARCVGGGGGGGEVDGGDPKKR) is disordered. Basic residues predominate over residues 35–44 (RARRRRRRGA). A compositionally biased stretch (gly residues) spans 46-56 (CVGGGGGGGEV). Positions 59–118 (GDPKKRRLSDEQVEMLELSFREERKLETGRKVHLASELGLDPKQVAVWFQNRRARHKSKL) form a DNA-binding region, homeobox. Positions 108 to 167 (QNRRARHKSKLLEEEFSKLKHAHDAAILHKCHLENEVLRLKERLVVAEEEVRRLRSAAGS) form a coiled coil.

It belongs to the HD-ZIP homeobox family. Class I subfamily. In terms of tissue distribution, expressed in roots, stems, leaf blades and panicles.

The protein resides in the nucleus. In terms of biological role, probable transcription factor. This is Homeobox-leucine zipper protein HOX14 (HOX14) from Oryza sativa subsp. indica (Rice).